Reading from the N-terminus, the 137-residue chain is Small ribosomal subunit protein uS12 (137 aa).

Disordered regions lie at residues 1–21 and 33–57; these read MPTINQLVRKPRKSKVEKSKS and KVQTNVSSPQKRGVATRVGTMTPRK. Position 102 is a 3-methylthioaspartic acid (Asp-102).

Belongs to the universal ribosomal protein uS12 family. Part of the 30S ribosomal subunit. Contacts proteins S8 and S17. May interact with IF1 in the 30S initiation complex.

Its function is as follows. With S4 and S5 plays an important role in translational accuracy. In terms of biological role, interacts with and stabilizes bases of the 16S rRNA that are involved in tRNA selection in the A site and with the mRNA backbone. Located at the interface of the 30S and 50S subunits, it traverses the body of the 30S subunit contacting proteins on the other side and probably holding the rRNA structure together. The combined cluster of proteins S8, S12 and S17 appears to hold together the shoulder and platform of the 30S subunit. The protein is Small ribosomal subunit protein uS12 of Streptococcus pneumoniae (strain ATCC 700669 / Spain 23F-1).